The chain runs to 71 residues: Hainantoxin-X-2 (71 aa).

Positions 1-26 are cleaved as a signal peptide; sequence MKTAIFTVVLALAVFAVLCLVVSTHA. Residues 27–43 constitute a propeptide that is removed on maturation; sequence ERHSKTDMEDSPMIQER. Disulfide bonds link Cys-52-Cys-65 and Cys-61-Cys-70.

The protein belongs to the neurotoxin 36 family. 02 subfamily. Expressed by the venom gland.

It localises to the secreted. Functionally, reversibly blocks N-type calcium channels (Cav2.2/CACNA1B) in rat dorsal root ganglion cells. Elicits no toxic symptoms in either vertebrates or invertebrates during a period of 48 hours post-injection, when it was assayed in vivo by direct injection into mice and cockroaches. The chain is Hainantoxin-X-2 from Cyriopagopus hainanus (Chinese bird spider).